We begin with the raw amino-acid sequence, 658 residues long: Threonine--tRNA ligase (658 aa).

The TGS domain maps to 1 to 61; it reads MSDVRVIIQR…KDGEEVEPVQ (61 aa). The interval 259–554 is catalytic; that stretch reads DHRKLGNELD…LLEHYAGAFP (296 aa). Cysteine 353, histidine 404, and histidine 531 together coordinate Zn(2+).

Belongs to the class-II aminoacyl-tRNA synthetase family. As to quaternary structure, homodimer. It depends on Zn(2+) as a cofactor.

The protein resides in the cytoplasm. It catalyses the reaction tRNA(Thr) + L-threonine + ATP = L-threonyl-tRNA(Thr) + AMP + diphosphate + H(+). In terms of biological role, catalyzes the attachment of threonine to tRNA(Thr) in a two-step reaction: L-threonine is first activated by ATP to form Thr-AMP and then transferred to the acceptor end of tRNA(Thr). Also edits incorrectly charged L-seryl-tRNA(Thr). In Streptomyces avermitilis (strain ATCC 31267 / DSM 46492 / JCM 5070 / NBRC 14893 / NCIMB 12804 / NRRL 8165 / MA-4680), this protein is Threonine--tRNA ligase.